A 211-amino-acid chain; its full sequence is tRNA (guanine-N(7)-)-methyltransferase (211 aa).

Positions 44, 69, 96, and 118 each coordinate S-adenosyl-L-methionine. D118 is an active-site residue. K122 contributes to the substrate binding site. The interval 124-129 (RHEKRR) is interaction with RNA. Substrate-binding positions include D154 and 191 to 194 (TEYE).

This sequence belongs to the class I-like SAM-binding methyltransferase superfamily. TrmB family.

The catalysed reaction is guanosine(46) in tRNA + S-adenosyl-L-methionine = N(7)-methylguanosine(46) in tRNA + S-adenosyl-L-homocysteine. It participates in tRNA modification; N(7)-methylguanine-tRNA biosynthesis. Functionally, catalyzes the formation of N(7)-methylguanine at position 46 (m7G46) in tRNA. The sequence is that of tRNA (guanine-N(7)-)-methyltransferase from Streptococcus equi subsp. zooepidemicus (strain MGCS10565).